Consider the following 119-residue polypeptide: Protein BEX4 (119 aa).

Positions 1–53 (MESKEELAANNLNGENAQQENEGREQAPTQNEETRHLGGGEGQKPGGNIRRGR) are disordered. Positions 8 to 20 (AANNLNGENAQQE) are enriched in low complexity. The interval 31–89 (NEETRHLGGGEGQKPGGNIRRGRVRRLVPNFRWAIPNRHIEHNEARDDVERFVGQMMEI) is interaction with SIRT2. The interval 31–119 (NEETRHLGGG…DNHYDFCLIP (89 aa)) is interaction with alpha-tubulin. Cys-116 contributes to the Zn(2+) binding site.

Belongs to the BEX family. Interacts with alpha-tubulin. Interacts with SIRT2. In terms of processing, ubiquitinated and degraded by the proteasome.

Its subcellular location is the cytoplasm. The protein resides in the cytoskeleton. It localises to the spindle pole. The protein localises to the nucleus. Functionally, may play a role in microtubule deacetylation by negatively regulating the SIRT2 deacetylase activity toward alpha-tubulin and thereby participate in the control of cell cycle progression and genomic stability. In absence of reductive stress, acts as a pseudosubstrate for the CRL2(FEM1B) complex: associates with FEM1B via zinc, thereby preventing association between FEM1B and its substrates. The polypeptide is Protein BEX4 (Pongo abelii (Sumatran orangutan)).